The primary structure comprises 472 residues: Eukaryotic translation initiation factor 2 subunit 3 (472 aa).

N-acetylalanine is present on alanine 2. The residue at position 16 (serine 16) is a Phosphoserine. A tr-type G domain is found at glutamine 39–arginine 248. Residues glycine 48–serine 55 form a G1 region. GTP is bound at residue alanine 51–threonine 56. The tract at residues asparagine 76–lysine 80 is G2. Positions aspartate 134–glycine 137 are G3. GTP-binding positions include asparagine 190–aspartate 193 and serine 225–glutamine 227. Residues asparagine 190–aspartate 193 form a G4 region. A G5 region spans residues serine 225–glutamine 227. Residues glycine 457–valine 469 form an interacts with CDC123 region.

The protein belongs to the TRAFAC class translation factor GTPase superfamily. Classic translation factor GTPase family. EIF2G subfamily. Eukaryotic translation initiation factor 2 eIF2 is a heterotrimeric complex composed of an alpha (EIF2S1), a beta (EIF2S2) and a gamma (EIF2S3) chain. eIF2 is member of the 43S pre-initiation complex (43S PIC). Interacts (via C-terminus) with CDC123; the interaction is direct.

It localises to the cytoplasm. The protein localises to the cytosol. The enzyme catalyses GTP + H2O = GDP + phosphate + H(+). Functionally, member of the eIF2 complex that functions in the early steps of protein synthesis by forming a ternary complex with GTP and initiator tRNA. This complex binds to a 40S ribosomal subunit, followed by mRNA binding to form the 43S pre-initiation complex (43S PIC). Junction of the 60S ribosomal subunit to form the 80S initiation complex is preceded by hydrolysis of the GTP bound to eIF2 and release of an eIF2-GDP binary complex. In order for eIF2 to recycle and catalyze another round of initiation, the GDP bound to eIF2 must exchange with GTP by way of a reaction catalyzed by eIF-2B. The polypeptide is Eukaryotic translation initiation factor 2 subunit 3 (EIF2S3) (Bos taurus (Bovine)).